Consider the following 212-residue polypeptide: Orotate phosphoribosyltransferase (212 aa).

Lysine 26 contributes to the 5-phospho-alpha-D-ribose 1-diphosphate binding site. 34–35 (FF) lines the orotate pocket. Residues 72–73 (YK), arginine 98, lysine 99, lysine 102, histidine 104, and 123–131 (DDVITAGTA) contribute to the 5-phospho-alpha-D-ribose 1-diphosphate site. 2 residues coordinate orotate: threonine 127 and arginine 155.

It belongs to the purine/pyrimidine phosphoribosyltransferase family. PyrE subfamily. In terms of assembly, homodimer. It depends on Mg(2+) as a cofactor.

It carries out the reaction orotidine 5'-phosphate + diphosphate = orotate + 5-phospho-alpha-D-ribose 1-diphosphate. It participates in pyrimidine metabolism; UMP biosynthesis via de novo pathway; UMP from orotate: step 1/2. Functionally, catalyzes the transfer of a ribosyl phosphate group from 5-phosphoribose 1-diphosphate to orotate, leading to the formation of orotidine monophosphate (OMP). The chain is Orotate phosphoribosyltransferase from Marinobacter nauticus (strain ATCC 700491 / DSM 11845 / VT8) (Marinobacter aquaeolei).